Consider the following 265-residue polypeptide: Probable cyclic nucleotide phosphodiesterase SynWH7803_1390 (265 aa).

Fe cation contacts are provided by Asp9, His11, Asp49, Asn86, His157, His196, and His198. Residues His11, Asp49, and 86–87 (NH) each bind AMP. His198 is a binding site for AMP.

This sequence belongs to the cyclic nucleotide phosphodiesterase class-III family. It depends on Fe(2+) as a cofactor.

The chain is Probable cyclic nucleotide phosphodiesterase SynWH7803_1390 from Synechococcus sp. (strain WH7803).